The following is a 346-amino-acid chain: Transcription factor 19 (346 aa).

In terms of domain architecture, FHA spans 31-88; the sequence is YRLGCRADLCDVALRPQQEPGFISEVHAELHAERRGDDWRVSLEDHSSQGTLVNNVRL. The residue at position 78 (serine 78) is a Phosphoserine. Disordered stretches follow at residues 136 to 168 and 190 to 289; these read PRSR…TLSP and LTFS…AAGG. Residues 138–147 are compositionally biased toward basic and acidic residues; it reads SRGEEGETRA. The segment covering 190 to 208 has biased composition (polar residues); that stretch reads LTFSRSGSGPQNPPVSTTP. The span at 250–260 shows a compositional bias: basic and acidic residues; it reads EPRKKLLRVEK. The segment at 294-343 adopts a PHD-type zinc-finger fold; sequence AAPCCCLPQEETVAWVQCDGCDTWFHVACVGCSIQAAKEADFRCPGCRVG. Zn(2+) is bound by residues cysteine 297, cysteine 299, cysteine 311, cysteine 314, histidine 319, cysteine 322, cysteine 337, and cysteine 340.

The protein resides in the nucleus. Potential transcription factor that may play a role in the regulation of genes involved in cell cycle G1/S transition. May bind to regulatory elements of genes, including the promoter of the transcription factor FOXO1. This Sus scrofa (Pig) protein is Transcription factor 19 (TCF19).